The primary structure comprises 170 residues: Cytochrome c-type biogenesis protein CcmE (170 aa).

The Cytoplasmic portion of the chain corresponds to 1-7 (MTRKKRR). A helical; Signal-anchor for type II membrane protein membrane pass occupies residues 8 to 28 (LILIAACGSVLALAVGLILYA). Residues 29–170 (MSGSIVFFRS…DSTLGPRSER (142 aa)) lie on the Periplasmic side of the membrane. Heme-binding residues include His-122 and Tyr-126. The interval 132–170 (ADALKAQGRWQEGGPNRGGPAPKPATAAADSTLGPRSER) is disordered.

This sequence belongs to the CcmE/CycJ family.

It is found in the cell inner membrane. In terms of biological role, heme chaperone required for the biogenesis of c-type cytochromes. Transiently binds heme delivered by CcmC and transfers the heme to apo-cytochromes in a process facilitated by CcmF and CcmH. This is Cytochrome c-type biogenesis protein CcmE from Methylobacterium radiotolerans (strain ATCC 27329 / DSM 1819 / JCM 2831 / NBRC 15690 / NCIMB 10815 / 0-1).